The primary structure comprises 266 residues: Imidazole glycerol phosphate synthase subunit HisF (266 aa).

Catalysis depends on residues Asp-11 and Asp-130.

The protein belongs to the HisA/HisF family. As to quaternary structure, heterodimer of HisH and HisF.

The protein localises to the cytoplasm. The enzyme catalyses 5-[(5-phospho-1-deoxy-D-ribulos-1-ylimino)methylamino]-1-(5-phospho-beta-D-ribosyl)imidazole-4-carboxamide + L-glutamine = D-erythro-1-(imidazol-4-yl)glycerol 3-phosphate + 5-amino-1-(5-phospho-beta-D-ribosyl)imidazole-4-carboxamide + L-glutamate + H(+). It participates in amino-acid biosynthesis; L-histidine biosynthesis; L-histidine from 5-phospho-alpha-D-ribose 1-diphosphate: step 5/9. IGPS catalyzes the conversion of PRFAR and glutamine to IGP, AICAR and glutamate. The HisF subunit catalyzes the cyclization activity that produces IGP and AICAR from PRFAR using the ammonia provided by the HisH subunit. In Nitrosopumilus maritimus (strain SCM1), this protein is Imidazole glycerol phosphate synthase subunit HisF.